The primary structure comprises 166 residues: MKKDLIAIGKIHGTHGVKGNLKFEIFVKNFYLPEEIYIKDEENELQPLNIETVDRKKGLIKFKNYDTPEKAKEISHRLIYVPEDLLPKLGEDEFYEFQLIGMDVYYNDKLIGKVEKIDDRLSQAYLIIKCTDEKTRHLPFINEFVKDVNVKENKMQITPPEGWFSL.

The region spanning 91-163 is the PRC barrel domain; it reads EDEFYEFQLI…KMQITPPEGW (73 aa).

This sequence belongs to the RimM family. In terms of assembly, binds ribosomal protein uS19.

The protein resides in the cytoplasm. Its function is as follows. An accessory protein needed during the final step in the assembly of 30S ribosomal subunit, possibly for assembly of the head region. Essential for efficient processing of 16S rRNA. May be needed both before and after RbfA during the maturation of 16S rRNA. It has affinity for free ribosomal 30S subunits but not for 70S ribosomes. This is Ribosome maturation factor RimM from Sulfurihydrogenibium sp. (strain YO3AOP1).